A 624-amino-acid chain; its full sequence is UvrABC system protein C (624 aa).

Residues 27-105 (LSPGVYRMLS…IKSLGPRYNI (79 aa)) enclose the GIY-YIG domain. The UVR domain occupies 215-250 (RRVQHDLTARMESAAEAMEYEAAAVFRDRIRALTRI).

Belongs to the UvrC family. As to quaternary structure, interacts with UvrB in an incision complex.

Its subcellular location is the cytoplasm. Its function is as follows. The UvrABC repair system catalyzes the recognition and processing of DNA lesions. UvrC both incises the 5' and 3' sides of the lesion. The N-terminal half is responsible for the 3' incision and the C-terminal half is responsible for the 5' incision. The chain is UvrABC system protein C from Paramagnetospirillum magneticum (strain ATCC 700264 / AMB-1) (Magnetospirillum magneticum).